Reading from the N-terminus, the 80-residue chain is uncharacterized protein (80 aa).

An N-terminal signal peptide occupies residues 1 to 20 (MVAADHRALGSNKSYPASQT). Residues 1–21 (MVAADHRALGSNKSYPASQTA) are disordered. Positions 11–21 (SNKSYPASQTA) are enriched in polar residues.

This is an uncharacterized protein from Mycobacterium tuberculosis (strain CDC 1551 / Oshkosh).